The primary structure comprises 330 residues: Phosphate acyltransferase (330 aa).

This sequence belongs to the PlsX family. As to quaternary structure, homodimer. Probably interacts with PlsY.

It is found in the cytoplasm. It carries out the reaction a fatty acyl-[ACP] + phosphate = an acyl phosphate + holo-[ACP]. The protein operates within lipid metabolism; phospholipid metabolism. Functionally, catalyzes the reversible formation of acyl-phosphate (acyl-PO(4)) from acyl-[acyl-carrier-protein] (acyl-ACP). This enzyme utilizes acyl-ACP as fatty acyl donor, but not acyl-CoA. The chain is Phosphate acyltransferase from Streptococcus pneumoniae (strain P1031).